The chain runs to 619 residues: uncharacterized protein (619 aa).

A signal peptide spans 1–21; the sequence is MKKLIAIIAVAAVVIAGFVFT.

This is an uncharacterized protein from Archaeoglobus fulgidus (strain ATCC 49558 / DSM 4304 / JCM 9628 / NBRC 100126 / VC-16).